The chain runs to 1581 residues: Pentafunctional AROM polypeptide (1581 aa).

The tract at residues 1-383 is 3-dehydroquinate synthase; the sequence is MKEIIKLSIL…YEKKASSVSD (383 aa). NAD(+) is bound by residues 43 to 45, 80 to 83, 111 to 113, and D116; these read DSN, EKSK, and GGV. R127 provides a ligand contact to 7-phospho-2-dehydro-3-deoxy-D-arabino-heptonate. An NAD(+)-binding site is contributed by 136–137; that stretch reads TT. 2 residues coordinate 7-phospho-2-dehydro-3-deoxy-D-arabino-heptonate: D143 and K149. Position 158 (K158) interacts with NAD(+). A 7-phospho-2-dehydro-3-deoxy-D-arabino-heptonate-binding site is contributed by N159. NAD(+) contacts are provided by residues 176–179 and N187; that span reads FLET. E191 contributes to the Zn(2+) binding site. 7-phospho-2-dehydro-3-deoxy-D-arabino-heptonate contacts are provided by residues 191-194 and K249; that span reads ELIK. Catalysis depends on E259, which acts as the Proton acceptor; for 3-dehydroquinate synthase activity. Residues 263 to 267 and H270 contribute to the 7-phospho-2-dehydro-3-deoxy-D-arabino-heptonate site; that span reads RTLLN. H270 provides a ligand contact to Zn(2+). H274 functions as the Proton acceptor; for 3-dehydroquinate synthase activity in the catalytic mechanism. The 7-phospho-2-dehydro-3-deoxy-D-arabino-heptonate site is built by H286 and K355. Position 286 (H286) interacts with Zn(2+). Positions 396–845 are EPSP synthase; it reads LYGIPLNAFQ…WDILNSTFKV (450 aa). C827 acts as the For EPSP synthase activity in catalysis. Positions 868-1065 are shikimate kinase; it reads ECTIFLIGMR…LKKKRSYFLS (198 aa). 875–882 is an ATP binding site; sequence GMRGAGKT. Positions 1066 to 1285 are 3-dehydroquinase; the sequence is LAFSDLENIF…IAPGQLSIKE (220 aa). H1189 serves as the catalytic Proton acceptor; for 3-dehydroquinate dehydratase activity. K1217 serves as the catalytic Schiff-base intermediate with substrate; for 3-dehydroquinate dehydratase activity. Residues 1298-1581 form a shikimate dehydrogenase region; sequence EKKYFLFGKP…VKYAILGPNK (284 aa).

The protein in the N-terminal section; belongs to the sugar phosphate cyclases superfamily. Dehydroquinate synthase family. This sequence in the 2nd section; belongs to the EPSP synthase family. In the 3rd section; belongs to the shikimate kinase family. It in the 4th section; belongs to the type-I 3-dehydroquinase family. The protein in the C-terminal section; belongs to the shikimate dehydrogenase family. As to quaternary structure, homodimer. Requires Zn(2+) as cofactor.

The protein resides in the cytoplasm. The catalysed reaction is 7-phospho-2-dehydro-3-deoxy-D-arabino-heptonate = 3-dehydroquinate + phosphate. The enzyme catalyses 3-dehydroquinate = 3-dehydroshikimate + H2O. It catalyses the reaction shikimate + NADP(+) = 3-dehydroshikimate + NADPH + H(+). It carries out the reaction shikimate + ATP = 3-phosphoshikimate + ADP + H(+). The catalysed reaction is 3-phosphoshikimate + phosphoenolpyruvate = 5-O-(1-carboxyvinyl)-3-phosphoshikimate + phosphate. The protein operates within metabolic intermediate biosynthesis; chorismate biosynthesis; chorismate from D-erythrose 4-phosphate and phosphoenolpyruvate: step 2/7. It participates in metabolic intermediate biosynthesis; chorismate biosynthesis; chorismate from D-erythrose 4-phosphate and phosphoenolpyruvate: step 3/7. Its pathway is metabolic intermediate biosynthesis; chorismate biosynthesis; chorismate from D-erythrose 4-phosphate and phosphoenolpyruvate: step 4/7. It functions in the pathway metabolic intermediate biosynthesis; chorismate biosynthesis; chorismate from D-erythrose 4-phosphate and phosphoenolpyruvate: step 5/7. The protein operates within metabolic intermediate biosynthesis; chorismate biosynthesis; chorismate from D-erythrose 4-phosphate and phosphoenolpyruvate: step 6/7. Functionally, the AROM polypeptide catalyzes 5 consecutive enzymatic reactions in prechorismate polyaromatic amino acid biosynthesis. The sequence is that of Pentafunctional AROM polypeptide (arom) from Pneumocystis carinii.